The following is a 545-amino-acid chain: MADILDSRPHAFSIKLWPPSLPTRKALIERITNNFSSKTIFTEKYGSLTKDQATENAKRIEDIAFSTANQQFEREPDGDGGSAVQLYAKECSKLILEVLKKGPVAKVAARELISEDSVSPRETFFDISKGKRAFIEAEEAEELLKPLKEPGNAYTKICFSNRSFGLGAARVAEPILASLKDQLKEVDLSDFVAGRPELEALEVMNIFSDALQGSILSSLNLSDNALGEKGVRAFGALLKSLSSLEELYLMNDGISKEAAQAVSELIPSTENLRVLHFHNNMTGDEGALAIAEVVKRSPLLENFRCSSTRVGSKGGIALSEALEHCTHMEKLDLRDNMFGTEAGVSLSKTLSSFKHMTELYLSYLNLEDEGAIAIVNALKESASPIEVLEMAGNDITVEAASAIAACVAAKQDLNKLNLSENELKDEGCVQIANCIEEGHSKLQYIDMSTNYIRRAGARALAHVVVKKEAFKLLNIDGNIISEEGIEELKEIFKKSPELLGALDENDPDGEEDDDDEEDEEDEENEGNGNGELESKLKNLEVNQED.

The tract at residues 1-116 is WPP; it reads MADILDSRPH…VAARELISED (116 aa). LRR repeat units lie at residues 213-236, 241-264, 269-296, 325-348, 353-380, 382-405, 410-433, 439-462, and 467-494; these read GSILSSLNLSDNALGEKGVRAFGA, LSSLEELYLMNDGISKEAAQAVSE, TENLRVLHFHNNMTGDEGALAIAEVVKR, CTHMEKLDLRDNMFGTEAGVSLSK, FKHMTELYLSYLNLEDEGAIAIVNALKE, ASPIEVLEMAGNDITVEAASAIAA, KQDLNKLNLSENELKDEGCVQIAN, HSKLQYIDMSTNYIRRAGARALAH, and KEAFKLLNIDGNIISEEGIEELKEIFKK. The interval 496–545 is disordered; sequence PELLGALDENDPDGEEDDDDEEDEEDEENEGNGNGELESKLKNLEVNQED. Acidic residues predominate over residues 503–525; that stretch reads DENDPDGEEDDDDEEDEEDEENE.

The protein belongs to the RNA1 family. In terms of assembly, homodimer. Interacts with WIP1 and WIP2 through its WPP domain. Component of Ran complexes at least composed of WIT1 or WIT2, RANGAP1 or RANGAP2, and WIP1 or WIP2 or WIP3. Interacts with WIT1.

It localises to the cytoplasm. It is found in the nucleus membrane. The protein resides in the cytoskeleton. Its subcellular location is the spindle. The protein localises to the phragmoplast. GTPase activator for the nuclear Ras-related regulatory protein Ran, converting it to the putatively inactive GDP-bound state. The chain is RAN GTPase-activating protein 2 (RANGAP2) from Arabidopsis thaliana (Mouse-ear cress).